The following is a 1010-amino-acid chain: Phosphatidylserine decarboxylase proenzyme 2 (1010 aa).

C2 domains are found at residues 1–114 (MSQA…SSWE) and 247–370 (DFES…DKPC). Asp-342, Ser-345, and Asp-348 together coordinate Ca(2+). The EF-hand domain maps to 458-493 (LRRQLWMHLLQGNDTQMKGTLDLIELNYFVDCLGSN). Residues Asp-734, His-793, and Ser-880 each act as charge relay system; for autoendoproteolytic cleavage activity in the active site. Ser-880 (schiff-base intermediate with substrate; via pyruvic acid; for decarboxylase activity) is an active-site residue. A Pyruvic acid (Ser); by autocatalysis modification is found at Ser-880.

This sequence belongs to the phosphatidylserine decarboxylase family. PSD-B subfamily. Eukaryotic type II sub-subfamily. In terms of assembly, heterodimer of a large membrane-associated beta subunit and a small pyruvoyl-containing alpha subunit. Interacts with pstB2. This interaction may be a means to structurally tether the donor membrane (ER) harboring PstB2 to acceptor membranes (Golgi/endosomes) harboring PSD2 during PtdSer transport to the site of PtdEtn synthesis. Pyruvate is required as a cofactor. Requires Ca(2+) as cofactor. Post-translationally, is synthesized initially as an inactive proenzyme. Formation of the active enzyme involves a self-maturation process in which the active site pyruvoyl group is generated from an internal serine residue via an autocatalytic post-translational modification. Two non-identical subunits are generated from the proenzyme in this reaction, and the pyruvate is formed at the N-terminus of the alpha chain, which is derived from the carboxyl end of the proenzyme. The autoendoproteolytic cleavage occurs by a canonical serine protease mechanism, in which the side chain hydroxyl group of the serine supplies its oxygen atom to form the C-terminus of the beta chain, while the remainder of the serine residue undergoes an oxidative deamination to produce ammonia and the pyruvoyl prosthetic group on the alpha chain. During this reaction, the Ser that is part of the protease active site of the proenzyme becomes the pyruvoyl prosthetic group, which constitutes an essential element of the active site of the mature decarboxylase.

It localises to the golgi apparatus membrane. Its subcellular location is the endosome membrane. It catalyses the reaction a 1,2-diacyl-sn-glycero-3-phospho-L-serine + H(+) = a 1,2-diacyl-sn-glycero-3-phosphoethanolamine + CO2. Its pathway is phospholipid metabolism; phosphatidylethanolamine biosynthesis; phosphatidylethanolamine from CDP-diacylglycerol: step 2/2. Functionally, catalyzes the formation of phosphatidylethanolamine (PtdEtn) from phosphatidylserine (PtdSer). Plays a central role in phospholipid metabolism and in the interorganelle trafficking of phosphatidylserine. The chain is Phosphatidylserine decarboxylase proenzyme 2 from Komagataella phaffii (strain GS115 / ATCC 20864) (Yeast).